Reading from the N-terminus, the 394-residue chain is NAD(P)H-quinone oxidoreductase subunit H (394 aa).

Belongs to the complex I 49 kDa subunit family. In terms of assembly, NDH-1 can be composed of about 15 different subunits; different subcomplexes with different compositions have been identified which probably have different functions.

It is found in the cellular thylakoid membrane. It catalyses the reaction a plastoquinone + NADH + (n+1) H(+)(in) = a plastoquinol + NAD(+) + n H(+)(out). The catalysed reaction is a plastoquinone + NADPH + (n+1) H(+)(in) = a plastoquinol + NADP(+) + n H(+)(out). Functionally, NDH-1 shuttles electrons from an unknown electron donor, via FMN and iron-sulfur (Fe-S) centers, to quinones in the respiratory and/or the photosynthetic chain. The immediate electron acceptor for the enzyme in this species is believed to be plastoquinone. Couples the redox reaction to proton translocation, and thus conserves the redox energy in a proton gradient. Cyanobacterial NDH-1 also plays a role in inorganic carbon-concentration. In Synechococcus sp. (strain CC9605), this protein is NAD(P)H-quinone oxidoreductase subunit H.